Consider the following 136-residue polypeptide: Pterin-4-alpha-carbinolamine dehydratase 2 (136 aa).

An N6-acetyllysine; alternate mark is found at Lys120, Lys124, and Lys131. N6-succinyllysine; alternate is present on residues Lys120, Lys124, and Lys131.

This sequence belongs to the pterin-4-alpha-carbinolamine dehydratase family. As to quaternary structure, homotetramer. Interacts with DYRK1B.

The enzyme catalyses (4aS,6R)-4a-hydroxy-L-erythro-5,6,7,8-tetrahydrobiopterin = (6R)-L-erythro-6,7-dihydrobiopterin + H2O. Involved in tetrahydrobiopterin biosynthesis. Seems to both prevent the formation of 7-pterins and accelerate the formation of quinonoid-BH2. Its function is as follows. Regulates the dimerization of homeodomain protein HNF-1-alpha and enhances its transcriptional activity. The polypeptide is Pterin-4-alpha-carbinolamine dehydratase 2 (Pcbd2) (Mus musculus (Mouse)).